The chain runs to 20 residues: Collagenolytic protease 35 kDa 2 (20 aa).

The Peptidase S1 domain maps to 1 to 20 (IVGGTEVTPGEIPYQLSFQD). The segment at 1-20 (IVGGTEVTPGEIPYQLSFQD) is disordered.

It belongs to the peptidase S1 family.

It catalyses the reaction Hydrolysis of proteins, with broad specificity for peptide bonds. Native collagen is cleaved about 75% of the length of the molecule from the N-terminus. Low activity on small molecule substrates of both trypsin and chymotrypsin.. In terms of biological role, this enzyme is a serine protease capable of degrading the native triple helix of collagen. This Chionoecetes opilio (Atlantic snow crab) protein is Collagenolytic protease 35 kDa 2.